The following is a 166-amino-acid chain: Sec-independent protein translocase protein TatB (166 aa).

Residues 2-22 (FNDIGALELLTLGVLAVLVFG) traverse the membrane as a helical segment. Residues 110-166 (TPAASDTANSAVNGSAGAAADGVTTSLTKTGETTPDLLKKAPQQAQPERPPFDADAT) are disordered. Residues 117–129 (ANSAVNGSAGAAA) are compositionally biased toward low complexity. The span at 132-142 (VTTSLTKTGET) shows a compositional bias: polar residues.

It belongs to the TatB family. The Tat system comprises two distinct complexes: a TatABC complex, containing multiple copies of TatA, TatB and TatC subunits, and a separate TatA complex, containing only TatA subunits. Substrates initially bind to the TatABC complex, which probably triggers association of the separate TatA complex to form the active translocon.

It localises to the cell membrane. In terms of biological role, part of the twin-arginine translocation (Tat) system that transports large folded proteins containing a characteristic twin-arginine motif in their signal peptide across membranes. Together with TatC, TatB is part of a receptor directly interacting with Tat signal peptides. TatB may form an oligomeric binding site that transiently accommodates folded Tat precursor proteins before their translocation. The chain is Sec-independent protein translocase protein TatB from Streptomyces griseus subsp. griseus (strain JCM 4626 / CBS 651.72 / NBRC 13350 / KCC S-0626 / ISP 5235).